The chain runs to 579 residues: 2-succinyl-5-enolpyruvyl-6-hydroxy-3-cyclohexene-1-carboxylate synthase (579 aa).

The protein belongs to the TPP enzyme family. MenD subfamily. As to quaternary structure, homodimer. It depends on Mg(2+) as a cofactor. Mn(2+) serves as cofactor. The cofactor is thiamine diphosphate.

The catalysed reaction is isochorismate + 2-oxoglutarate + H(+) = 5-enolpyruvoyl-6-hydroxy-2-succinyl-cyclohex-3-ene-1-carboxylate + CO2. Its pathway is quinol/quinone metabolism; 1,4-dihydroxy-2-naphthoate biosynthesis; 1,4-dihydroxy-2-naphthoate from chorismate: step 2/7. It participates in quinol/quinone metabolism; menaquinone biosynthesis. In terms of biological role, catalyzes the thiamine diphosphate-dependent decarboxylation of 2-oxoglutarate and the subsequent addition of the resulting succinic semialdehyde-thiamine pyrophosphate anion to isochorismate to yield 2-succinyl-5-enolpyruvyl-6-hydroxy-3-cyclohexene-1-carboxylate (SEPHCHC). This is 2-succinyl-5-enolpyruvyl-6-hydroxy-3-cyclohexene-1-carboxylate synthase from Shewanella frigidimarina (strain NCIMB 400).